The primary structure comprises 351 residues: MVPMDRLLQIVRRFEFLEARLSAGAAPAEIAALSREYAELKPVVVEISAYRTALEDLAEAEAMLSDPEMRALAEDEIPALRARIPGMEQALRLALLPKDAADARPAILEIRPGTGGEEAALFAGDLLRMYQRYAEGQGWRFELLDLAPSELGGIREATARVEGEGAFARLKYESGVHRVQRVPETEAQGRIHTSAATVAVLPEAEEVDLEIPAADIRIDTMRSSGAGGQHVNTTDSAVRITHLPTGIIVTSSEKSQHRNREIAMQVLRARLYDLERQRLADARSADRKAQVGSGDRSERIRTYNFPQGRMTDHRINLTLYALPQIMAGDLSEVISALTAHDQAARLAEMEA.

Gln-229 carries the N5-methylglutamine modification.

It belongs to the prokaryotic/mitochondrial release factor family. In terms of processing, methylated by PrmC. Methylation increases the termination efficiency of RF1.

It localises to the cytoplasm. In terms of biological role, peptide chain release factor 1 directs the termination of translation in response to the peptide chain termination codons UAG and UAA. In Cereibacter sphaeroides (strain ATCC 17023 / DSM 158 / JCM 6121 / CCUG 31486 / LMG 2827 / NBRC 12203 / NCIMB 8253 / ATH 2.4.1.) (Rhodobacter sphaeroides), this protein is Peptide chain release factor 1.